The following is a 511-amino-acid chain: Histidine ammonia-lyase (511 aa).

Positions 142–144 form a cross-link, 5-imidazolinone (Ala-Gly); sequence ASG. Serine 143 carries the post-translational modification 2,3-didehydroalanine (Ser).

This sequence belongs to the PAL/histidase family. In terms of processing, contains an active site 4-methylidene-imidazol-5-one (MIO), which is formed autocatalytically by cyclization and dehydration of residues Ala-Ser-Gly.

It is found in the cytoplasm. It carries out the reaction L-histidine = trans-urocanate + NH4(+). The protein operates within amino-acid degradation; L-histidine degradation into L-glutamate; N-formimidoyl-L-glutamate from L-histidine: step 1/3. In Rhizobium rhizogenes (Agrobacterium rhizogenes), this protein is Histidine ammonia-lyase.